The following is a 1022-amino-acid chain: Histone-lysine N-methyltransferase TRX1 (1022 aa).

Positions Ser-31–Ala-151 are disordered. The segment covering Glu-65–Leu-78 has biased composition (pro residues). Positions Gly-127–Lys-139 are enriched in basic and acidic residues. The region spanning Pro-264–Gly-327 is the PWWP domain. Basic and acidic residues predominate over residues Ser-367 to Ala-393. The disordered stretch occupies residues Ser-367–Tyr-399. The FYR N-terminal domain maps to Met-402–Asn-461. The region spanning Lys-465–Gly-548 is the FYR C-terminal domain. The Phorbol-ester/DAG-type zinc finger occupies Gly-553–Cys-609. 2 consecutive PHD-type zinc fingers follow at residues Leu-564–Glu-615 and Leu-677–Arg-744. The tract at residues Ser-620–Arg-744 is extended PHD domain (ePHD). Positions Arg-861–Arg-979 constitute an SET domain. Zn(2+) is bound at residue Cys-943. Tyr-978 contacts S-adenosyl-L-methionine. In terms of domain architecture, Post-SET spans Gln-985 to Asn-1001. 3 residues coordinate Zn(2+): Cys-989, Cys-991, and Cys-996.

Belongs to the class V-like SAM-binding methyltransferase superfamily. Histone-lysine methyltransferase family. TRX/MLL subfamily. As to quaternary structure, interacts with EHD3. Expressed in leaf blades and panicles.

The protein localises to the nucleus. The catalysed reaction is L-lysyl(4)-[histone H3] + S-adenosyl-L-methionine = N(6)-methyl-L-lysyl(4)-[histone H3] + S-adenosyl-L-homocysteine + H(+). Possesses histone H3 methyltransferase activity in vitro. Methylates 'Lys-4' of histone H3. H3 'Lys-4' methylation represents a specific tag for epigenetic transcriptional activation. Functions as a receptor for the lipid messenger phosphatidylinositol 5-phosphate (PI5P), which negatively regulates its transcriptional activation activity. Involved in the regulation of flowering time and floral induction under long day (LD) conditions. Acts as an activator of flowering under LD conditions. May function through binding to EHD3, a repressor of GHD7. The polypeptide is Histone-lysine N-methyltransferase TRX1 (Oryza sativa subsp. japonica (Rice)).